The following is a 447-amino-acid chain: Phosphoglucosamine mutase (447 aa).

The Phosphoserine intermediate role is filled by Ser-102. Residues Ser-102, Asp-241, Asp-243, and Asp-245 each contribute to the Mg(2+) site. At Ser-102 the chain carries Phosphoserine.

It belongs to the phosphohexose mutase family. It depends on Mg(2+) as a cofactor. Activated by phosphorylation.

It carries out the reaction alpha-D-glucosamine 1-phosphate = D-glucosamine 6-phosphate. In terms of biological role, catalyzes the conversion of glucosamine-6-phosphate to glucosamine-1-phosphate. The polypeptide is Phosphoglucosamine mutase (Pseudoalteromonas atlantica (strain T6c / ATCC BAA-1087)).